Consider the following 499-residue polypeptide: Serine/threonine-protein phosphatase 5 (499 aa).

The disordered stretch occupies residues 1 to 23 (MAMAEGERTECAEPPRDEPPADG). Position 2 is an N-acetylalanine (A2). TPR repeat units follow at residues 28-61 (AEEL…NPSN), 62-95 (AIYY…DKKY), and 96-129 (IKGY…KPHD). The tract at residues 184 to 499 (GKVTISFMKE…ANTLLQLGMM (316 aa)) is catalytic. Positions 242, 244, and 271 each coordinate Mn(2+). H244 lines the substrate pocket. Substrate is bound by residues R275 and 303-304 (NH). Position 303 (N303) interacts with Mn(2+). Catalysis depends on H304, which acts as the Proton donor/acceptor. H352 serves as a coordination point for Mn(2+). Residues R400 and H427 each coordinate substrate. A Mn(2+)-binding site is contributed by H427. The segment at 495-499 (QLGMM) is required for autoinhibition.

Belongs to the PPP phosphatase family. PP-5 (PP-T) subfamily. Probably forms a complex composed of chaperones HSP90 and HSP70, co-chaperones STIP1/HOP, CDC37, PPP5C, PTGES3/p23, TSC1 and client protein TSC2. Probably forms a complex composed of chaperones HSP90 and HSP70, co-chaperones CDC37, PPP5C, TSC1 and client protein TSC2, CDK4, AKT, RAF1 and NR3C1; this complex does not contain co-chaperones STIP1/HOP and PTGES3/p23. Part of a complex with HSP90/HSP90AA1 and steroid receptors. Interacts (via TPR repeats) with HSP90AA1 (via TPR repeat-binding motif) or HSPA1A/HSPA1B; the interaction is direct and activates the phosphatase activity. Dissociates from HSPA1A/HSPA1B and HSP90AA1 in response to arachidonic acid. Interacts with CPNE1 (via VWFA domain). Interacts with CDC16, CDC27. Interacts with KLHDC10 (via the 6 Kelch repeats); inhibits the phosphatase activity on MAP3K5. Interacts with ATM and ATR; both interactions are induced by DNA damage and enhance ATM and ATR kinase activity. Interacts with RAD17; reduced by DNA damage. Interacts with nuclear receptors such as NR3C1/GCR and PPARG (activated by agonist); regulates their transactivation activities. Interacts (via TPR repeats) with S100 proteins S100A1, S100A2, S100A6, S100B and S100P; the interactions are calcium-dependent, strongly activate PPP5C phosphatase activity and compete with HSP90AA1 and MAP3K5 interactions. Interacts with SMAD2 and SMAD3 but not with SMAD1; decreases SMAD3 phosphorylation and protein levels. Interacts (via TPR repeats) with CRY1 and CRY2; the interaction with CRY2 down-regulates the phosphatase activity on CSNK1E. Interacts (via TPR repeats) with the active form of RAC1, GNA12 or GNA13; these interactions activate the phosphatase activity and translocate PPP5C to the cell membrane. Interacts with FLCN. Mg(2+) serves as cofactor. The cofactor is Mn(2+). Activated by at least two different proteolytic cleavages producing a 56 kDa and a 50 kDa form. In terms of tissue distribution, ubiquitous.

It localises to the nucleus. Its subcellular location is the cytoplasm. The protein localises to the cell membrane. The enzyme catalyses O-phospho-L-seryl-[protein] + H2O = L-seryl-[protein] + phosphate. It catalyses the reaction O-phospho-L-threonyl-[protein] + H2O = L-threonyl-[protein] + phosphate. With respect to regulation, autoinhibited. In the autoinhibited state, the TPR domain interacts with the catalytic region and prevents substrate access to the catalytic pocket. Allosterically activated by various polyunsaturated fatty acids, free long-chain fatty-acids and long-chain fatty acyl-CoA esters, arachidonic acid being the most effective activator. HSP90A and probably RAC1, GNA12 and GNA13 can also release the autoinhibition by the TPR repeat. Activation by RAC1, GNA12 and GNA13 is synergistic with the one produced by fatty acids binding. Inhibited by okadaic acid. Serine/threonine-protein phosphatase that dephosphorylates a myriad of proteins involved in different signaling pathways including the kinases CSNK1E, ASK1/MAP3K5, PRKDC and RAF1, the nuclear receptors NR3C1, PPARG, ESR1 and ESR2, SMAD proteins and TAU/MAPT. Implicated in wide ranging cellular processes, including apoptosis, differentiation, DNA damage response, cell survival, regulation of ion channels or circadian rhythms, in response to steroid and thyroid hormones, calcium, fatty acids, TGF-beta as well as oxidative and genotoxic stresses. Participates in the control of DNA damage response mechanisms such as checkpoint activation and DNA damage repair through, for instance, the regulation ATM/ATR-signaling and dephosphorylation of PRKDC and TP53BP1. Inhibits ASK1/MAP3K5-mediated apoptosis induced by oxidative stress. Plays a positive role in adipogenesis, mainly through the dephosphorylation and activation of PPARG transactivation function. Also dephosphorylates and inhibits the anti-adipogenic effect of NR3C1. Regulates the circadian rhythms, through the dephosphorylation and activation of CSNK1E. May modulate TGF-beta signaling pathway by the regulation of SMAD3 phosphorylation and protein expression levels. Dephosphorylates and may play a role in the regulation of TAU/MAPT. Through their dephosphorylation, may play a role in the regulation of ions channels such as KCNH2. Dephosphorylate FNIP1, disrupting interaction with HSP90AA1/Hsp90. In Homo sapiens (Human), this protein is Serine/threonine-protein phosphatase 5 (PPP5C).